A 636-amino-acid chain; its full sequence is NADP-dependent malic enzyme, chloroplastic (636 aa).

The tract at residues 1–28 (MLSTRTAAVAASASPASPWKLGGRSEGG) is disordered. The transit peptide at 1–62 (MLSTRTAAVA…LPPRRVDAVA (62 aa)) directs the protein to the chloroplast. Positions 7-18 (AAVAASASPASP) are enriched in low complexity. Y184 acts as the Proton donor in catalysis. R237 contacts NAD(+). The Proton acceptor role is filled by K255. E327, D328, and D351 together coordinate a divalent metal cation. Residue D351 coordinates NAD(+). 380–396 (LFLGAGEAGTGIAELIA) serves as a coordination point for NADP(+). N492 serves as a coordination point for NAD(+).

Belongs to the malic enzymes family. Homotetramer. It depends on Mg(2+) as a cofactor. Mn(2+) serves as cofactor.

The protein localises to the plastid. It localises to the chloroplast. The enzyme catalyses (S)-malate + NADP(+) = pyruvate + CO2 + NADPH. It catalyses the reaction oxaloacetate + H(+) = pyruvate + CO2. It functions in the pathway photosynthesis; C4 acid pathway. The chloroplastic ME isoform decarboxylates malate shuttled from neighboring mesophyll cells. The CO(2) released is then refixed by ribulose-bisphosphate carboxylase. This pathway eliminates the photorespiratory loss of CO(2) that occurs in most plants. The sequence is that of NADP-dependent malic enzyme, chloroplastic (MOD1) from Zea mays (Maize).